Consider the following 859-residue polypeptide: Glucans biosynthesis glucosyltransferase H (859 aa).

6 helical membrane-spanning segments follow: residues 144 to 166 (YILL…GILP), 200 to 222 (LLLF…MGFL), 523 to 545 (VMSY…LLAV), 573 to 595 (VALF…ILIW), 608 to 630 (VTVS…MLFH), and 684 to 706 (SFLW…SVIS).

It belongs to the glycosyltransferase 2 family. OpgH subfamily.

The protein localises to the cell inner membrane. It participates in glycan metabolism; osmoregulated periplasmic glucan (OPG) biosynthesis. Its function is as follows. Involved in the biosynthesis of osmoregulated periplasmic glucans (OPGs). This Pseudomonas syringae pv. tomato (strain ATCC BAA-871 / DC3000) protein is Glucans biosynthesis glucosyltransferase H.